Consider the following 319-residue polypeptide: Beta-ketoacyl-[acyl-carrier-protein] synthase III (319 aa).

Active-site residues include cysteine 113 and histidine 246. Positions glutamine 247–arginine 251 are ACP-binding. Residue asparagine 276 is part of the active site.

It belongs to the thiolase-like superfamily. FabH family. As to quaternary structure, homodimer.

The protein localises to the cytoplasm. The enzyme catalyses malonyl-[ACP] + acetyl-CoA + H(+) = 3-oxobutanoyl-[ACP] + CO2 + CoA. It participates in lipid metabolism; fatty acid biosynthesis. Catalyzes the condensation reaction of fatty acid synthesis by the addition to an acyl acceptor of two carbons from malonyl-ACP. Catalyzes the first condensation reaction which initiates fatty acid synthesis and may therefore play a role in governing the total rate of fatty acid production. Possesses both acetoacetyl-ACP synthase and acetyl transacylase activities. Its substrate specificity determines the biosynthesis of branched-chain and/or straight-chain of fatty acids. This chain is Beta-ketoacyl-[acyl-carrier-protein] synthase III, found in Ehrlichia chaffeensis (strain ATCC CRL-10679 / Arkansas).